Reading from the N-terminus, the 324-residue chain is Polyketide biosynthesis acyltransferase homolog BaeD (324 aa).

Ser-99 is a catalytic residue.

The protein resides in the cytoplasm. The protein operates within antibiotic biosynthesis; bacillaene biosynthesis. Probably involved in some intermediate steps for the synthesis of the antibiotic polyketide bacillaene which is involved in secondary metabolism. This Bacillus velezensis (strain DSM 23117 / BGSC 10A6 / LMG 26770 / FZB42) (Bacillus amyloliquefaciens subsp. plantarum) protein is Polyketide biosynthesis acyltransferase homolog BaeD (baeD).